Here is a 291-residue protein sequence, read N- to C-terminus: Venom metalloproteinase inhibitor DM43 (291 aa).

2 Ig-like V-type domains span residues 22-79 and 114-171; these read TNVT…ILTS and GLET…PASA. Asn23 is a glycosylation site (N-linked (GlcNAc...) asparagine). Intrachain disulfides connect Cys28–Cys74 and Cys121–Cys163. N-linked (GlcNAc...) asparagine glycosylation is found at Asn156, Asn160, and Asn175. Positions 191-288 constitute an Ig-like V-type 3 domain; it reads PKANFYILND…DSNVLELDLS (98 aa). Cys213 and Cys265 are oxidised to a cystine.

As to quaternary structure, homodimer. In terms of processing, N-glycosylated. In terms of tissue distribution, blood and milk.

In terms of biological role, metalloproteinase inhibitor. This chain is Venom metalloproteinase inhibitor DM43, found in Didelphis marsupialis (Southern opossum).